A 383-amino-acid chain; its full sequence is Galactokinase (383 aa).

Residue 34 to 37 (EHTD) coordinates substrate. ATP is bound at residue 124–130 (GAGLSSS). Serine 130 and glutamate 162 together coordinate Mg(2+). Aspartate 174 serves as the catalytic Proton acceptor. Tyrosine 223 contributes to the substrate binding site.

The protein belongs to the GHMP kinase family. GalK subfamily.

It localises to the cytoplasm. The catalysed reaction is alpha-D-galactose + ATP = alpha-D-galactose 1-phosphate + ADP + H(+). It functions in the pathway carbohydrate metabolism; galactose metabolism. Catalyzes the transfer of the gamma-phosphate of ATP to D-galactose to form alpha-D-galactose-1-phosphate (Gal-1-P). The sequence is that of Galactokinase from Yersinia pseudotuberculosis serotype O:1b (strain IP 31758).